Here is a 73-residue protein sequence, read N- to C-terminus: uncharacterized protein (73 aa).

Positions 1-21 (MTLFSSLSSLSTGSLKSSVSS) are cleaved as a signal peptide. Over residues 1–38 (MTLFSSLSSLSTGSLKSSVSSIETGSSSGSFGSNETSG) the composition is skewed to low complexity. The tract at residues 1 to 43 (MTLFSSLSSLSTGSLKSSVSSIETGSSSGSFGSNETSGWGSHH) is disordered. Asn-34 carries N-linked (GlcNAc...) asparagine glycosylation.

It is found in the secreted. This is an uncharacterized protein from Dictyostelium discoideum (Social amoeba).